Consider the following 219-residue polypeptide: MSETAPAAPAAPAPAEKTPIKKKARKAAGGAKRKASGPPVSELITKAVAASKERSGVSLAALKKALAAAGYDVEKNNSRIKLGLKSLVSKGTLVQTKGTGASGSFKLNKKAASGEAKPKAKKAGAAKAKKPAGAAKKPKKATGTATPKKSTKKTPKKAKKPAAAAGAKKAKSPKKAKATKAKKAPKSPAKARAVKPKAAKPKTSKPKAAKPKKTAAKKK.

Residues 1 to 15 (MSETAPAAPAAPAPA) are compositionally biased toward low complexity. The interval 1–41 (MSETAPAAPAAPAPAEKTPIKKKARKAAGGAKRKASGPPVS) is disordered. Residue Ser-2 is modified to N-acetylserine. Ser-2 carries the phosphoserine modification. Lys-17 carries the N6-acetyllysine modification. At Thr-18 the chain carries Phosphothreonine. Basic residues predominate over residues 20 to 35 (IKKKARKAAGGAKRKA). Lys-26 is modified (N6-acetyllysine; alternate). An N6-methyllysine; alternate modification is found at Lys-26. The residue at position 34 (Lys-34) is an N6-(beta-hydroxybutyryl)lysine; alternate. Position 34 is an N6-succinyllysine; alternate (Lys-34). At Ser-36 the chain carries Phosphoserine. The H15 domain occupies 36 to 109 (SGPPVSELIT…GASGSFKLNK (74 aa)). At Lys-52 the chain carries N6-(beta-hydroxybutyryl)lysine. Residue Arg-54 is modified to Citrulline. 4 positions are modified to N6-(beta-hydroxybutyryl)lysine: Lys-64, Lys-85, Lys-90, and Lys-106. A disordered region spans residues 92–219 (TLVQTKGTGA…KPKKTAAKKK (128 aa)). A compositionally biased stretch (basic residues) spans 119-140 (KAKKAGAAKAKKPAGAAKKPKK). Thr-146 is modified (phosphothreonine). Composition is skewed to basic residues over residues 149–160 (KSTKKTPKKAKK) and 168–185 (KKAKSPKKAKATKAKKAP). At Ser-150 the chain carries ADP-ribosylserine. Phosphoserine is present on Ser-187. Positions 192-219 (RAVKPKAAKPKTSKPKAAKPKKTAAKKK) are enriched in basic residues.

This sequence belongs to the histone H1/H5 family. H1 histones are progressively phosphorylated during the cell cycle, becoming maximally phosphorylated during late G2 phase and M phase, and being dephosphorylated sharply thereafter. In terms of processing, acetylated at Lys-26. Deacetylated at Lys-26 by SIRT1. Post-translationally, citrullination at Arg-54 (H1R54ci) by PADI4 takes place within the DNA-binding site of H1 and results in its displacement from chromatin and global chromatin decondensation, thereby promoting pluripotency and stem cell maintenance. ADP-ribosylated on Ser-150 in response to DNA damage.

Its subcellular location is the nucleus. It is found in the chromosome. Its function is as follows. Histone H1 protein binds to linker DNA between nucleosomes forming the macromolecular structure known as the chromatin fiber. Histones H1 are necessary for the condensation of nucleosome chains into higher-order structured fibers. Also acts as a regulator of individual gene transcription through chromatin remodeling, nucleosome spacing and DNA methylation. The chain is Histone H1.4 from Rattus norvegicus (Rat).